The sequence spans 201 residues: Peptide deformylase (201 aa).

Fe cation is bound by residues cysteine 121 and histidine 163. The active site involves glutamate 164. Fe cation is bound at residue histidine 167.

It belongs to the polypeptide deformylase family. The cofactor is Fe(2+).

It carries out the reaction N-terminal N-formyl-L-methionyl-[peptide] + H2O = N-terminal L-methionyl-[peptide] + formate. Its function is as follows. Removes the formyl group from the N-terminal Met of newly synthesized proteins. Requires at least a dipeptide for an efficient rate of reaction. N-terminal L-methionine is a prerequisite for activity but the enzyme has broad specificity at other positions. This chain is Peptide deformylase, found in Synechococcus sp. (strain CC9605).